A 404-amino-acid chain; its full sequence is Glucose-1-phosphate adenylyltransferase (404 aa).

Residues Tyr-99, Gly-164, 179 to 180 (EK), and Ser-197 each bind alpha-D-glucose 1-phosphate.

The protein belongs to the bacterial/plant glucose-1-phosphate adenylyltransferase family. Homotetramer.

The catalysed reaction is alpha-D-glucose 1-phosphate + ATP + H(+) = ADP-alpha-D-glucose + diphosphate. It functions in the pathway glycan biosynthesis; glycogen biosynthesis. In terms of biological role, involved in the biosynthesis of ADP-glucose, a building block required for the elongation reactions to produce glycogen. Catalyzes the reaction between ATP and alpha-D-glucose 1-phosphate (G1P) to produce pyrophosphate and ADP-Glc. This is Glucose-1-phosphate adenylyltransferase from Rhodococcus jostii (strain RHA1).